A 256-amino-acid polypeptide reads, in one-letter code: MTTTSATAVLNGLSSSFLTGGKKTQALLGAHVTARVTTPKRFVVAAAAVAPKKSWIPAVKSGGNLVDPEWLDGSLPGDFGFDPLGLGKDPAFLKWYREAELIHGRWAMAAVLGIFVGQAWSGIPWFEAGADPGAIAPFSFGSLLGTQLLLMGWVESKRWVDFFDNDSQSIDWATPWSKTAENFANFTGEQGYPGGKFFDPLALAGTLNNGVYVPDTEKLERLKLAEIKHSRLAMLAMLIFYFEAGQGKTPLGALGL.

A chloroplast-targeting transit peptide spans 1–45; that stretch reads MTTTSATAVLNGLSSSFLTGGKKTQALLGAHVTARVTTPKRFVVA. A run of 2 helical transmembrane segments spans residues 106–126 and 134–154; these read WAMA…IPWF and AIAP…MGWV.

It belongs to the ELIP/psbS family.

The protein localises to the plastid. Its subcellular location is the chloroplast thylakoid membrane. The polypeptide is Chlorophyll a-b binding protein CP24 10B, chloroplastic (CAP10B) (Solanum lycopersicum (Tomato)).